The chain runs to 347 residues: Geranylgeranyl pyrophosphate synthase 7, chloroplastic (347 aa).

The N-terminal 39 residues, 1 to 39 (MTTLNLSIFPSVKISSSASIPGFIKIQPFLLRRKLSTVL), are a transit peptide targeting the chloroplast. The isopentenyl diphosphate site is built by lysine 95, arginine 98, and histidine 127. Aspartate 134 and aspartate 140 together coordinate Mg(2+). A dimethylallyl diphosphate-binding site is contributed by arginine 145. An isopentenyl diphosphate-binding site is contributed by arginine 146. Dimethylallyl diphosphate contacts are provided by lysine 232, threonine 233, glutamine 270, lysine 287, and lysine 297.

Belongs to the FPP/GGPP synthase family. In terms of assembly, monomer. Requires Mg(2+) as cofactor.

The protein localises to the plastid. It localises to the chloroplast. The enzyme catalyses isopentenyl diphosphate + dimethylallyl diphosphate = (2E)-geranyl diphosphate + diphosphate. It catalyses the reaction isopentenyl diphosphate + (2E)-geranyl diphosphate = (2E,6E)-farnesyl diphosphate + diphosphate. The catalysed reaction is isopentenyl diphosphate + (2E,6E)-farnesyl diphosphate = (2E,6E,10E)-geranylgeranyl diphosphate + diphosphate. It participates in isoprenoid biosynthesis; farnesyl diphosphate biosynthesis; farnesyl diphosphate from geranyl diphosphate and isopentenyl diphosphate: step 1/1. The protein operates within isoprenoid biosynthesis; geranyl diphosphate biosynthesis; geranyl diphosphate from dimethylallyl diphosphate and isopentenyl diphosphate: step 1/1. Its pathway is isoprenoid biosynthesis; geranylgeranyl diphosphate biosynthesis; geranylgeranyl diphosphate from farnesyl diphosphate and isopentenyl diphosphate: step 1/1. Its function is as follows. Catalyzes the trans-addition of the three molecules of IPP onto DMAPP to form geranylgeranyl pyrophosphate. The sequence is that of Geranylgeranyl pyrophosphate synthase 7, chloroplastic from Arabidopsis thaliana (Mouse-ear cress).